The primary structure comprises 626 residues: Putative Xaa-Pro dipeptidyl-peptidase (626 aa).

Residues serine 231, aspartate 348, and histidine 379 each act as charge relay system in the active site.

It belongs to the peptidase S15 family.

The enzyme catalyses Hydrolyzes Xaa-Pro-|- bonds to release unblocked, N-terminal dipeptides from substrates including Ala-Pro-|-p-nitroanilide and (sequentially) Tyr-Pro-|-Phe-Pro-|-Gly-Pro-|-Ile.. The sequence is that of Putative Xaa-Pro dipeptidyl-peptidase from Rhodopirellula baltica (strain DSM 10527 / NCIMB 13988 / SH1).